The following is an 859-amino-acid chain: Collagen alpha-1(II) chain (859 aa).

Positions 1 to 607 are disordered; it reads LQGLPGKDGE…LGQTEKGPDP (607 aa). A 4-hydroxyproline mark is found at P31 and P40. Position 42 is a 3-hydroxyproline (P42). 2 positions are modified to 4-hydroxyproline: P43 and P46. The span at 78–121 shows a compositional bias: low complexity; that stretch reads ERGSPGAQGLQGPRGLPGTPGTDGPKGATGPAGPNGAQGPPGLQ. Residues 136-147 are compositionally biased toward basic and acidic residues; it reads KGDRGDVGEKGP. Low complexity-rich tracts occupy residues 204-220 and 249-277; these read PAGF…PGAK and PTGV…AGRV. P279 is modified (3-hydroxyproline). Positions 279 to 292 are enriched in pro residues; it reads PPGPNGNPGPPGPP. Residues P280, P286, and P292 each carry the 4-hydroxyproline modification. Residues 306–321 are compositionally biased toward low complexity; that stretch reads DAGPPGRAGDPGLQGP. Residues 487–501 are compositionally biased toward basic and acidic residues; sequence RGDKGETGEAGERGL. Residues 491–586 are triple-helical region; sequence GETGEAGERG…PGPPGPPGPP (96 aa). The residue at position 516 (P516) is a 3-hydroxyproline. Over residues 520–529 the composition is skewed to low complexity; sequence SGDQGAAGPA. P553 is subject to 4-hydroxyproline. At P558 the chain carries 3-hydroxyproline. At P559 the chain carries 4-hydroxyproline. Pro residues predominate over residues 570 to 586; the sequence is PAGPPGNPGPPGPPGPP. P573 bears the 3-hydroxyproline mark. 2 positions are modified to 4-hydroxyproline: P574 and P577. The residue at position 579 (P579) is a 3-hydroxyproline. A 4-hydroxyproline mark is found at P580 and P583. 3-hydroxyproline is present on P585. Position 586 is a 4-hydroxyproline (P586). Residues 587–613 form a nonhelical region (C-terminal) region; the sequence is GTGIDMSAFAGLGQTEKGPDPIRYMRA. The propeptide at 614 to 859 is C-terminal propeptide; the sequence is DEAAGGLRQH…GVDIGPVCFL (246 aa). In terms of domain architecture, Fibrillar collagen NC1 spans 625 to 859; sequence VEVDATLKSL…GVDIGPVCFL (235 aa). 3 disulfides stabilise this stretch: C655–C687, C695–C857, and C765–C810. Ca(2+) contacts are provided by D673, N675, Q676, C678, and D681. N-linked (GlcNAc...) asparagine glycosylation is present at N760.

This sequence belongs to the fibrillar collagen family. Homotrimers of alpha 1(II) chains. In terms of processing, contains mostly 4-hydroxyproline. Prolines at the third position of the tripeptide repeating unit (G-X-P) are 4-hydroxylated in some or all of the chains. Contains 3-hydroxyproline at a few sites. This modification occurs on the first proline residue in the sequence motif Gly-Pro-Hyp, where Hyp is 4-hydroxyproline. Post-translationally, lysine residues at the third position of the tripeptide repeating unit (G-X-Y) are 5-hydroxylated in some or all of the chains. In terms of processing, O-glycosylated on hydroxylated lysine residues. The O-linked glycan consists of a Glc-Gal disaccharide.

It is found in the secreted. It localises to the extracellular space. Its subcellular location is the extracellular matrix. Functionally, type II collagen is specific for cartilaginous tissues. It is essential for the normal embryonic development of the skeleton, for linear growth and for the ability of cartilage to resist compressive forces. The protein is Collagen alpha-1(II) chain of Gallus gallus (Chicken).